The following is a 34-amino-acid chain: Conotoxin de13a (34 aa).

A 4-hydroxyproline mark is found at proline 3 and proline 7. Tryptophan 14 carries the 6'-bromotryptophan modification. Lysine 18 is modified (5-hydroxylysine). At proline 21 the chain carries 4-hydroxyproline. Position 25 is a 5-hydroxylysine (lysine 25). Histidine 32 is modified (histidine amide).

Contains 4 disulfide bonds. Post-translationally, the diastereomeric form of 5-hydroxylysine found was not conclusively established, but it is probably 5R. As to expression, expressed by the venom duct.

It localises to the secreted. The chain is Conotoxin de13a from Conasprella delessertii (Sozon's cone).